The following is a 257-amino-acid chain: Urease accessory protein UreD (257 aa).

This sequence belongs to the UreD family. UreD, UreF and UreG form a complex that acts as a GTP-hydrolysis-dependent molecular chaperone, activating the urease apoprotein by helping to assemble the nickel containing metallocenter of UreC. The UreE protein probably delivers the nickel.

It is found in the cytoplasm. Functionally, required for maturation of urease via the functional incorporation of the urease nickel metallocenter. The chain is Urease accessory protein UreD from Sporosarcina pasteurii (Bacillus pasteurii).